The primary structure comprises 120 residues: Small ribosomal subunit protein uS13 (120 aa).

The disordered stretch occupies residues 94–120 (GLPLRGQRTRTNARTRKGPRKAIAGKK).

It belongs to the universal ribosomal protein uS13 family. In terms of assembly, part of the 30S ribosomal subunit. Forms a loose heterodimer with protein S19. Forms two bridges to the 50S subunit in the 70S ribosome.

Its function is as follows. Located at the top of the head of the 30S subunit, it contacts several helices of the 16S rRNA. In the 70S ribosome it contacts the 23S rRNA (bridge B1a) and protein L5 of the 50S subunit (bridge B1b), connecting the 2 subunits; these bridges are implicated in subunit movement. Contacts the tRNAs in the A and P-sites. This chain is Small ribosomal subunit protein uS13, found in Azoarcus sp. (strain BH72).